Consider the following 431-residue polypeptide: Enolase (431 aa).

(2R)-2-phosphoglycerate is bound at residue glutamine 163. Residue glutamate 205 is the Proton donor of the active site. Mg(2+)-binding residues include aspartate 242, glutamate 283, and aspartate 310. Residues lysine 335, arginine 364, serine 365, and lysine 386 each contribute to the (2R)-2-phosphoglycerate site. Residue lysine 335 is the Proton acceptor of the active site.

The protein belongs to the enolase family. Requires Mg(2+) as cofactor.

The protein localises to the cytoplasm. The protein resides in the secreted. It is found in the cell surface. It carries out the reaction (2R)-2-phosphoglycerate = phosphoenolpyruvate + H2O. It functions in the pathway carbohydrate degradation; glycolysis; pyruvate from D-glyceraldehyde 3-phosphate: step 4/5. In terms of biological role, catalyzes the reversible conversion of 2-phosphoglycerate (2-PG) into phosphoenolpyruvate (PEP). It is essential for the degradation of carbohydrates via glycolysis. This chain is Enolase, found in Kineococcus radiotolerans (strain ATCC BAA-149 / DSM 14245 / SRS30216).